The following is a 321-amino-acid chain: tRNA U34 carboxymethyltransferase (321 aa).

Carboxy-S-adenosyl-L-methionine contacts are provided by residues Lys-90, Trp-104, Lys-109, Gly-129, 151–153 (DPT), 180–181 (IE), Met-195, Tyr-199, and Arg-314.

The protein belongs to the class I-like SAM-binding methyltransferase superfamily. CmoB family. Homotetramer.

The enzyme catalyses carboxy-S-adenosyl-L-methionine + 5-hydroxyuridine(34) in tRNA = 5-carboxymethoxyuridine(34) in tRNA + S-adenosyl-L-homocysteine + H(+). Its function is as follows. Catalyzes carboxymethyl transfer from carboxy-S-adenosyl-L-methionine (Cx-SAM) to 5-hydroxyuridine (ho5U) to form 5-carboxymethoxyuridine (cmo5U) at position 34 in tRNAs. This chain is tRNA U34 carboxymethyltransferase, found in Mannheimia succiniciproducens (strain KCTC 0769BP / MBEL55E).